The following is a 248-amino-acid chain: uncharacterized protein (248 aa).

A run of 6 helical transmembrane segments spans residues 65–85 (IIIY…QFLT), 105–125 (SITS…ILWY), 126–146 (ISWT…LGFI), 156–176 (LCCF…TLLI), 188–208 (LILN…SDYS), and 222–242 (VIYI…YKYT).

It localises to the cell membrane. This is an uncharacterized protein from Rickettsia prowazekii (strain Madrid E).